The chain runs to 376 residues: Lipid-A-disaccharide synthase (376 aa).

Belongs to the LpxB family.

It catalyses the reaction a lipid X + a UDP-2-N,3-O-bis[(3R)-3-hydroxyacyl]-alpha-D-glucosamine = a lipid A disaccharide + UDP + H(+). It participates in bacterial outer membrane biogenesis; LPS lipid A biosynthesis. Its function is as follows. Condensation of UDP-2,3-diacylglucosamine and 2,3-diacylglucosamine-1-phosphate to form lipid A disaccharide, a precursor of lipid A, a phosphorylated glycolipid that anchors the lipopolysaccharide to the outer membrane of the cell. This is Lipid-A-disaccharide synthase from Pseudomonas fluorescens (strain Pf0-1).